The following is a 322-amino-acid chain: Germ cell-specific gene 1-like protein (322 aa).

Residues 1 to 8 are Cytoplasmic-facing; that stretch reads MELSRRNR. Residues 9-29 form a helical membrane-spanning segment; that stretch reads SLLSVVLNLLALSFSVAAFFT. Over 30-125 the chain is Extracellular; that stretch reads SYWCEGTHKV…IELSPDSEKG (96 aa). A helical membrane pass occupies residues 126–146; it reads VLWLSVISEFLYIILLSLGFL. At 147 to 166 the chain is on the cytoplasmic side; it reads LMCLEFFSSSNFIDGLKINA. A helical membrane pass occupies residues 167-187; it reads FAAIITVLSGLLGMVAHMMYM. Residues 188–209 are Extracellular-facing; that stretch reads TVFQVTVNLGPKDWRPQTWYYG. The chain crosses the membrane as a helical span at residues 210–230; the sequence is WSFGLAWLSFTLCMSASVLTL. At 231 to 322 the chain is on the cytoplasmic side; sequence NTYTKTILEF…MDLEDDGDQC (92 aa).

This sequence belongs to the GSG1 family. In terms of assembly, component of the AMPAR complex.

The protein localises to the cell membrane. It is found in the synapse. Its function is as follows. As a component of the AMPAR complex, modifies AMPA receptor (AMPAR) gating. This Xenopus tropicalis (Western clawed frog) protein is Germ cell-specific gene 1-like protein (gsg1l).